Consider the following 302-residue polypeptide: 4-hydroxy-tetrahydrodipicolinate synthase (302 aa).

Position 55 (Thr-55) interacts with pyruvate. The active-site Proton donor/acceptor is the Tyr-144. The Schiff-base intermediate with substrate role is filled by Lys-172. Val-214 lines the pyruvate pocket.

This sequence belongs to the DapA family. In terms of assembly, homotetramer; dimer of dimers.

It localises to the cytoplasm. The catalysed reaction is L-aspartate 4-semialdehyde + pyruvate = (2S,4S)-4-hydroxy-2,3,4,5-tetrahydrodipicolinate + H2O + H(+). Its pathway is amino-acid biosynthesis; L-lysine biosynthesis via DAP pathway; (S)-tetrahydrodipicolinate from L-aspartate: step 3/4. Functionally, catalyzes the condensation of (S)-aspartate-beta-semialdehyde [(S)-ASA] and pyruvate to 4-hydroxy-tetrahydrodipicolinate (HTPA). This Parasynechococcus marenigrum (strain WH8102) protein is 4-hydroxy-tetrahydrodipicolinate synthase.